A 322-amino-acid polypeptide reads, in one-letter code: Corticotropin-releasing factor-binding protein (322 aa).

The N-terminal stretch at 1 to 24 (MSPNFKLQCHFILIFLTALRGESR) is a signal peptide. Cystine bridges form between Cys-60–Cys-81, Cys-104–Cys-141, Cys-183–Cys-205, Cys-237–Cys-264, and Cys-277–Cys-318. N-linked (GlcNAc...) asparagine glycosylation is present at Asn-204.

Belongs to the CRF-binding protein family.

It is found in the secreted. Functionally, binds CRF and inactivates it. May prevent inappropriate pituitary-adrenal stimulation in pregnancy. This chain is Corticotropin-releasing factor-binding protein (CRHBP), found in Homo sapiens (Human).